We begin with the raw amino-acid sequence, 169 residues long: Small ribosomal subunit protein uS5 (169 aa).

The S5 DRBM domain maps to 14–77 (LQEKVVEVRR…EDAKKNLIVV (64 aa)).

This sequence belongs to the universal ribosomal protein uS5 family. As to quaternary structure, part of the 30S ribosomal subunit. Contacts proteins S4 and S8.

Functionally, with S4 and S12 plays an important role in translational accuracy. Located at the back of the 30S subunit body where it stabilizes the conformation of the head with respect to the body. This Clostridioides difficile (strain 630) (Peptoclostridium difficile) protein is Small ribosomal subunit protein uS5.